A 139-amino-acid chain; its full sequence is Large ribosomal subunit protein bL20 (139 aa).

This sequence belongs to the bacterial ribosomal protein bL20 family.

Binds directly to 23S ribosomal RNA and is necessary for the in vitro assembly process of the 50S ribosomal subunit. It is not involved in the protein synthesizing functions of that subunit. The protein is Large ribosomal subunit protein bL20 of Leuconostoc mesenteroides subsp. mesenteroides (strain ATCC 8293 / DSM 20343 / BCRC 11652 / CCM 1803 / JCM 6124 / NCDO 523 / NBRC 100496 / NCIMB 8023 / NCTC 12954 / NRRL B-1118 / 37Y).